Reading from the N-terminus, the 181-residue chain is Secreted chorismate mutase (181 aa).

Residues 1-20 form the signal peptide; it reads MLASVALAALAGVGTPHATA. A Chorismate mutase domain is found at 21–100; it reads DDASPLVPLV…ATSSVEHTRF (80 aa). Substrate is bound by residues R36, K47, D56, 59-63, 92-96, and R121; these read REQQV and TSSVE. Cysteines 147 and 180 form a disulfide.

As to quaternary structure, homodimer.

The protein resides in the secreted. The catalysed reaction is chorismate = prephenate. Its pathway is metabolic intermediate biosynthesis; prephenate biosynthesis; prephenate from chorismate: step 1/1. Catalyzes the Claisen rearrangement of chorismate to prephenate. May play some role in the pathogenicity. This is Secreted chorismate mutase from Mycolicibacterium smegmatis (strain ATCC 700084 / mc(2)155) (Mycobacterium smegmatis).